Reading from the N-terminus, the 268-residue chain is Glucosamine-6-phosphate deaminase (268 aa).

The active-site Proton acceptor; for enolization step is Asp67. Asn137 (for ring-opening step) is an active-site residue. The active-site Proton acceptor; for ring-opening step is His139. Glu144 (for ring-opening step) is an active-site residue.

The protein belongs to the glucosamine/galactosamine-6-phosphate isomerase family. NagB subfamily. As to quaternary structure, homohexamer.

It catalyses the reaction alpha-D-glucosamine 6-phosphate + H2O = beta-D-fructose 6-phosphate + NH4(+). The protein operates within amino-sugar metabolism; N-acetylneuraminate degradation; D-fructose 6-phosphate from N-acetylneuraminate: step 5/5. Catalyzes the reversible isomerization-deamination of glucosamine 6-phosphate (GlcN6P) to form fructose 6-phosphate (Fru6P) and ammonium ion. In Pseudoalteromonas translucida (strain TAC 125), this protein is Glucosamine-6-phosphate deaminase.